Here is an 87-residue protein sequence, read N- to C-terminus: Toxin Css39.8 (87 aa).

The signal sequence occupies residues 1 to 19 (MNSLLMITACFFLIGTVWA). Residues 20-85 (KEGYLVNKST…TYPLPNKSCS (66 aa)) form the LCN-type CS-alpha/beta domain. Disulfide bonds link C31–C84, C35–C60, C44–C65, and C48–C67.

It belongs to the long (4 C-C) scorpion toxin superfamily. Sodium channel inhibitor family. Beta subfamily. In terms of tissue distribution, expressed by the venom gland.

Its subcellular location is the secreted. Functionally, beta toxins bind voltage-independently at site-4 of sodium channels (Nav) and shift the voltage of activation toward more negative potentials thereby affecting sodium channel activation and promoting spontaneous and repetitive firing. This toxin is lethal to crustaceans (freshwater crayfish (Cambarellus montezumae spp.)), it provokes a reversible paralysis to insects (crickets (Achaeta spp.)), but is not toxic to mice. At high concentrations, it does displace the (beta) mammal-specific toxin Cn2 from rat brain synaptosomes. This Centruroides suffusus (Durango bark scorpion) protein is Toxin Css39.8.